The following is a 261-amino-acid chain: MPAKTRNVLIACSDYYGPFYKDGENTGAFFLELLHPYLVFRDACFNVDIVTESGKIQFDDHSVAGPAIDKGSKGEEFLSYDDHIASGPELSKAEKYVLENKDDMFWRIVQNSKTADEVNPDKYDIFFVAGGHATLFDFPKATNLQKLGTSIYENGGVVAAVCHGPTLLPFMKRQTSDGSVSIVCGKDVTAFDRVAEDKSKLMEALKKYNLEVLDDMLNDAGANFIKSPNPFGDFVIADGRLVTGSNPASATSTAKTALRVL.

Residues Cys162, His163, and Glu196 contribute to the active site.

This sequence belongs to the peptidase C56 family. HSP31-like subfamily.

The catalysed reaction is methylglyoxal + H2O = (R)-lactate + H(+). In terms of biological role, catalyzes the conversion of methylglyoxal (MG) to D-lactate in a single glutathione (GSH)-independent step. May play a role in detoxifying endogenously produced glyoxals. Involved in protection against reactive oxygen species (ROS). The polypeptide is Probable glutathione-independent glyoxalase hsp3103 (Schizosaccharomyces pombe (strain 972 / ATCC 24843) (Fission yeast)).